Here is an 856-residue protein sequence, read N- to C-terminus: Rod cGMP-specific 3',5'-cyclic phosphodiesterase subunit beta (856 aa).

Ser2 is subject to N-acetylserine. GAF domains lie at 71–220 (NMER…TLNL) and 252–429 (DIER…GWSV). One can recognise a PDEase domain in the interval 481–814 (EEDELGKILK…KEWKALADEY (334 aa)). The Proton donor role is filled by His557. A divalent metal cation is bound by residues His561, His597, Asp598, and Asp718. Cys853 carries S-geranylgeranyl cysteine lipidation. Residues 854–856 (CIL) constitute a propeptide, removed in mature form.

The protein belongs to the cyclic nucleotide phosphodiesterase family. Oligomer composed of two catalytic chains (alpha and beta), an inhibitory chain (gamma) and the delta chain. Requires a divalent metal cation as cofactor.

It is found in the membrane. The protein localises to the cell projection. It localises to the cilium. Its subcellular location is the photoreceptor outer segment. It catalyses the reaction 3',5'-cyclic GMP + H2O = GMP + H(+). In terms of biological role, rod-specific cGMP phosphodiesterase that catalyzes the hydrolysis of 3',5'-cyclic GMP. Necessary for the formation of a functional phosphodiesterase holoenzyme. Involved in retinal circadian rhythm photoentrainment via modulation of UVA and orange light-induced phase-shift of the retina clock. May participate in processes of transmission and amplification of the visual signal. This Mus musculus (Mouse) protein is Rod cGMP-specific 3',5'-cyclic phosphodiesterase subunit beta.